We begin with the raw amino-acid sequence, 202 residues long: MASQTLVSPSPLSSHSLLRTSFSGVSVKLAPQFSTLATSNFKPLTVVAAAKKAVSVLKGTSAVEGVVTLTQDDEGPTTVNVRITGLTPGLHGFHLHEYGDTTNGCISTGPHFNPNKLTHGAPEDEIRHAGDLGNIVANAEGVAEATIVDNQIPLTGPNSVVGRALVVHELQDDLGKGGHELSLSTGNAGGRLACGVVGLTPV.

The N-terminal 48 residues, 1–48 (MASQTLVSPSPLSSHSLLRTSFSGVSVKLAPQFSTLATSNFKPLTVVA), are a transit peptide targeting the chloroplast. Cu cation-binding residues include H94, H96, and H111. C105 and C194 are joined by a disulfide. The Zn(2+) site is built by H111, H119, H128, and D131. H168 contacts Cu cation.

This sequence belongs to the Cu-Zn superoxide dismutase family. In terms of assembly, homotetramer. Cu cation is required as a cofactor. Requires Zn(2+) as cofactor.

It localises to the plastid. The protein resides in the chloroplast. The catalysed reaction is 2 superoxide + 2 H(+) = H2O2 + O2. Functionally, destroys radicals which are normally produced within the cells and which are toxic to biological systems. This is Superoxide dismutase [Cu-Zn], chloroplastic (SODCP) from Pisum sativum (Garden pea).